A 357-amino-acid chain; its full sequence is A-type ATP synthase subunit C (357 aa).

The protein belongs to the V-ATPase V0D/AC39 subunit family. Has multiple subunits with at least A(3), B(3), C, D, E, F, H, I and proteolipid K(x).

The protein resides in the cell membrane. In terms of biological role, component of the A-type ATP synthase that produces ATP from ADP in the presence of a proton gradient across the membrane. This chain is A-type ATP synthase subunit C, found in Methanococcoides burtonii (strain DSM 6242 / NBRC 107633 / OCM 468 / ACE-M).